The sequence spans 97 residues: SAGA-associated factor 11 (97 aa).

The SGF11-type zinc finger occupies Ile70–Cys91.

It belongs to the SGF11 family. In terms of assembly, component of the 1.8 MDa SAGA transcription coactivator-HAT complex. SAGA is built of 5 distinct domains with specialized functions. Within the SAGA complex, SUS1, SGF11, SGF73 and UBP8 form an additional subcomplex of SAGA called the DUB module (deubiquitination module). Interacts directly with SGF73, SUS1 and UBP8.

The protein resides in the nucleus. In terms of biological role, functions as a component of the transcription regulatory histone acetylation (HAT) complex SAGA. At the promoters, SAGA is required for recruitment of the basal transcription machinery. It influences RNA polymerase II transcriptional activity through different activities such as TBP interaction and promoter selectivity, interaction with transcription activators, and chromatin modification through histone acetylation and deubiquitination. SAGA acetylates nucleosomal histone H3 to some extent (to form H3K9ac, H3K14ac, H3K18ac and H3K23ac). SAGA interacts with DNA via upstream activating sequences (UASs). Involved in transcriptional regulation of a subset of SAGA-regulated genes. Within the SAGA complex, participates in a subcomplex, that specifically deubiquitinates histones H2B. The chain is SAGA-associated factor 11 from Kluyveromyces lactis (strain ATCC 8585 / CBS 2359 / DSM 70799 / NBRC 1267 / NRRL Y-1140 / WM37) (Yeast).